The following is a 421-amino-acid chain: ATP phosphoribosyltransferase regulatory subunit (421 aa).

It belongs to the class-II aminoacyl-tRNA synthetase family. HisZ subfamily. Heteromultimer composed of HisG and HisZ subunits.

It localises to the cytoplasm. It participates in amino-acid biosynthesis; L-histidine biosynthesis; L-histidine from 5-phospho-alpha-D-ribose 1-diphosphate: step 1/9. Its function is as follows. Required for the first step of histidine biosynthesis. May allow the feedback regulation of ATP phosphoribosyltransferase activity by histidine. The chain is ATP phosphoribosyltransferase regulatory subunit from Clostridium novyi (strain NT).